The sequence spans 748 residues: Putative transmembrane protein ORF88 (748 aa).

The N-terminal stretch at 1–20 (MIIMKSIILLLAWFLTKTQA) is a signal peptide. Topologically, residues 21-723 (NMLTESLYLS…LNLAPFKTLS (703 aa)) are extracellular. Residues N55, N78, N99, N152, N189, N390, N467, and N499 are each glycosylated (N-linked (GlcNAc...) asparagine; by host). A disordered region spans residues 531–574 (LTFDSPPPPPTTTQAPPPPPTTTQAPPPPPTTTQAPPPPIVINT). The span at 535–570 (SPPPPPTTTQAPPPPPTTTQAPPPPPTTTQAPPPPI) shows a compositional bias: pro residues. 5 N-linked (GlcNAc...) asparagine; by host glycosylation sites follow: N573, N584, N599, N612, and N617. Residues 650-680 (PSIGRAPIPPPDVPVEPPRSIPTTNAPSPEE) form a disordered region. The segment covering 656–669 (PIPPPDVPVEPPRS) has biased composition (pro residues). A helical transmembrane segment spans residues 724 to 744 (YAGIGVVSFALLFTILVVCLI). Residues 745–748 (KFSI) are Cytoplasmic-facing.

The protein resides in the host membrane. The protein is Putative transmembrane protein ORF88 of Magallana gigas (Pacific oyster).